The primary structure comprises 30 residues: Neurotoxin II.22.5 (30 aa).

An LCN-type CS-alpha/beta domain is found at 1-30 (KEGYIVNYHTGCKYTCAKLGDNDYCLRECK).

The protein belongs to the long (4 C-C) scorpion toxin superfamily. Sodium channel inhibitor family. Beta subfamily. In terms of tissue distribution, expressed by the venom gland.

The protein localises to the secreted. Binds to sodium channels (Nav) and inhibits the inactivation of the activated channels, thereby blocking neuronal transmission. This is Neurotoxin II.22.5 from Centruroides tecomanus (Scorpion).